The chain runs to 142 residues: uncharacterized protein (142 aa).

N-linked (GlcNAc...) asparagine; by host glycans are attached at residues Asn29 and Asn67. The helical transmembrane segment at 88–108 (VFYLGYPVIFIIGVTYFSIIA) threads the bilayer.

The protein localises to the membrane. This is an uncharacterized protein from Acanthamoeba polyphaga mimivirus (APMV).